The sequence spans 195 residues: Imidazoleglycerol-phosphate dehydratase (195 aa).

It belongs to the imidazoleglycerol-phosphate dehydratase family.

The protein resides in the cytoplasm. The catalysed reaction is D-erythro-1-(imidazol-4-yl)glycerol 3-phosphate = 3-(imidazol-4-yl)-2-oxopropyl phosphate + H2O. Its pathway is amino-acid biosynthesis; L-histidine biosynthesis; L-histidine from 5-phospho-alpha-D-ribose 1-diphosphate: step 6/9. This is Imidazoleglycerol-phosphate dehydratase from Pelobacter propionicus (strain DSM 2379 / NBRC 103807 / OttBd1).